Consider the following 363-residue polypeptide: Flagellar P-ring protein (363 aa).

A signal peptide spans 1 to 20 (MKKLTLVLFGMLFLASSAHA).

This sequence belongs to the FlgI family. In terms of assembly, the basal body constitutes a major portion of the flagellar organelle and consists of four rings (L,P,S, and M) mounted on a central rod.

Its subcellular location is the periplasm. The protein resides in the bacterial flagellum basal body. Its function is as follows. Assembles around the rod to form the L-ring and probably protects the motor/basal body from shearing forces during rotation. This is Flagellar P-ring protein from Vibrio atlanticus (strain LGP32) (Vibrio splendidus (strain Mel32)).